The sequence spans 310 residues: Porphobilinogen deaminase (310 aa).

S-(dipyrrolylmethanemethyl)cysteine is present on cysteine 242.

The protein belongs to the HMBS family. Monomer. Dipyrromethane is required as a cofactor.

The enzyme catalyses 4 porphobilinogen + H2O = hydroxymethylbilane + 4 NH4(+). Its pathway is porphyrin-containing compound metabolism; protoporphyrin-IX biosynthesis; coproporphyrinogen-III from 5-aminolevulinate: step 2/4. Functionally, tetrapolymerization of the monopyrrole PBG into the hydroxymethylbilane pre-uroporphyrinogen in several discrete steps. This is Porphobilinogen deaminase from Psychromonas ingrahamii (strain DSM 17664 / CCUG 51855 / 37).